The primary structure comprises 136 residues: Small ribosomal subunit protein uS11c (136 aa).

It belongs to the universal ribosomal protein uS11 family. In terms of assembly, part of the 30S ribosomal subunit.

The protein localises to the plastid. Its subcellular location is the chloroplast. This chain is Small ribosomal subunit protein uS11c, found in Helianthus annuus (Common sunflower).